A 229-amino-acid polypeptide reads, in one-letter code: Cytidylate kinase (229 aa).

12 to 20 is a binding site for ATP; sequence GPSGSGKGT.

The protein belongs to the cytidylate kinase family. Type 1 subfamily.

It is found in the cytoplasm. The enzyme catalyses CMP + ATP = CDP + ADP. It catalyses the reaction dCMP + ATP = dCDP + ADP. The protein is Cytidylate kinase of Pseudomonas syringae pv. syringae (strain B728a).